Reading from the N-terminus, the 600-residue chain is Elongation factor 4 (600 aa).

The tr-type G domain maps to 7–189 (SLIRNFSIIA…ALVQRLPAPT (183 aa)). GTP contacts are provided by residues 19–24 (DHGKST) and 136–139 (NKID).

The protein belongs to the TRAFAC class translation factor GTPase superfamily. Classic translation factor GTPase family. LepA subfamily.

Its subcellular location is the cell inner membrane. The enzyme catalyses GTP + H2O = GDP + phosphate + H(+). Required for accurate and efficient protein synthesis under certain stress conditions. May act as a fidelity factor of the translation reaction, by catalyzing a one-codon backward translocation of tRNAs on improperly translocated ribosomes. Back-translocation proceeds from a post-translocation (POST) complex to a pre-translocation (PRE) complex, thus giving elongation factor G a second chance to translocate the tRNAs correctly. Binds to ribosomes in a GTP-dependent manner. This Gluconobacter oxydans (strain 621H) (Gluconobacter suboxydans) protein is Elongation factor 4.